Consider the following 115-residue polypeptide: MEAKATAKFVRYTPRKVNQVLALIRNKKVEKTLEILSFLPKSTAVLVKKVLKSATANAGKFEDYSGLKVKEAWVGNGPILKRIRAGSKGRSMPIKKRTVHLTIIVTDASTYLRKK.

Belongs to the universal ribosomal protein uL22 family. Part of the 50S ribosomal subunit.

This protein binds specifically to 23S rRNA; its binding is stimulated by other ribosomal proteins, e.g. L4, L17, and L20. It is important during the early stages of 50S assembly. It makes multiple contacts with different domains of the 23S rRNA in the assembled 50S subunit and ribosome. Its function is as follows. The globular domain of the protein is located near the polypeptide exit tunnel on the outside of the subunit, while an extended beta-hairpin is found that lines the wall of the exit tunnel in the center of the 70S ribosome. In Endomicrobium trichonymphae, this protein is Large ribosomal subunit protein uL22.